Consider the following 248-residue polypeptide: Aspartate/glutamate leucyltransferase (248 aa).

Belongs to the R-transferase family. Bpt subfamily.

It localises to the cytoplasm. The catalysed reaction is N-terminal L-glutamyl-[protein] + L-leucyl-tRNA(Leu) = N-terminal L-leucyl-L-glutamyl-[protein] + tRNA(Leu) + H(+). It carries out the reaction N-terminal L-aspartyl-[protein] + L-leucyl-tRNA(Leu) = N-terminal L-leucyl-L-aspartyl-[protein] + tRNA(Leu) + H(+). Functionally, functions in the N-end rule pathway of protein degradation where it conjugates Leu from its aminoacyl-tRNA to the N-termini of proteins containing an N-terminal aspartate or glutamate. This Methylorubrum populi (strain ATCC BAA-705 / NCIMB 13946 / BJ001) (Methylobacterium populi) protein is Aspartate/glutamate leucyltransferase.